Consider the following 355-residue polypeptide: Protein RecA (355 aa).

An ATP-binding site is contributed by 67–74 (GPESSGKT).

Belongs to the RecA family.

It is found in the cytoplasm. Functionally, can catalyze the hydrolysis of ATP in the presence of single-stranded DNA, the ATP-dependent uptake of single-stranded DNA by duplex DNA, and the ATP-dependent hybridization of homologous single-stranded DNAs. It interacts with LexA causing its activation and leading to its autocatalytic cleavage. The chain is Protein RecA from Shewanella piezotolerans (strain WP3 / JCM 13877).